The chain runs to 361 residues: MMERVYNFSAGPSILPLPVLEKVQKELVNYNGTGMSIMEMSHRSSYFQSIIDEAGSLLRELMNIPDEYEVLFLQGGASLQFSMIPLNLMNTYKKAGYVLTGSWSKKALQEAEKVGEVQVIASSENEKFTTIPKLDGLLGDEKLDYVHITTNNTIEGTKYVDIPHVDKVPLVADMSPNILSERYDVSKFGLIYAGAQKNLGPAGLTIAIIKRDLIGGADRYCPTMLNYETYSKNNSLYNTLPSFSIYVTKLVLEWLKEQGGVSAIEEQNKMKSSLLYNFLDESKLLTSPVDPAYRSLMNIPFTTPSEELNNEFLQKAKERGLVTLKGHRSVGGMRASIYNAMPVQGVQQLVNYMKEFELENR.

Residue Arg43 coordinates L-glutamate. Residues 77-78, Trp103, Thr153, Asp173, and Gln196 contribute to the pyridoxal 5'-phosphate site; that span reads AS. Residue Lys197 is modified to N6-(pyridoxal phosphate)lysine. Residue 238-239 participates in pyridoxal 5'-phosphate binding; the sequence is NT.

This sequence belongs to the class-V pyridoxal-phosphate-dependent aminotransferase family. SerC subfamily. Homodimer. Pyridoxal 5'-phosphate is required as a cofactor.

The protein resides in the cytoplasm. The enzyme catalyses O-phospho-L-serine + 2-oxoglutarate = 3-phosphooxypyruvate + L-glutamate. It carries out the reaction 4-(phosphooxy)-L-threonine + 2-oxoglutarate = (R)-3-hydroxy-2-oxo-4-phosphooxybutanoate + L-glutamate. The protein operates within amino-acid biosynthesis; L-serine biosynthesis; L-serine from 3-phospho-D-glycerate: step 2/3. Its function is as follows. Catalyzes the reversible conversion of 3-phosphohydroxypyruvate to phosphoserine and of 3-hydroxy-2-oxo-4-phosphonooxybutanoate to phosphohydroxythreonine. In Bacillus anthracis (strain A0248), this protein is Phosphoserine aminotransferase.